An 887-amino-acid polypeptide reads, in one-letter code: Alanine--tRNA ligase (887 aa).

Histidine 564, histidine 568, cysteine 676, and histidine 680 together coordinate Zn(2+).

This sequence belongs to the class-II aminoacyl-tRNA synthetase family. Requires Zn(2+) as cofactor.

The protein localises to the cytoplasm. It catalyses the reaction tRNA(Ala) + L-alanine + ATP = L-alanyl-tRNA(Ala) + AMP + diphosphate. In terms of biological role, catalyzes the attachment of alanine to tRNA(Ala) in a two-step reaction: alanine is first activated by ATP to form Ala-AMP and then transferred to the acceptor end of tRNA(Ala). Also edits incorrectly charged Ser-tRNA(Ala) and Gly-tRNA(Ala) via its editing domain. The protein is Alanine--tRNA ligase of Chelativorans sp. (strain BNC1).